Reading from the N-terminus, the 418-residue chain is NADH-quinone oxidoreductase subunit D (418 aa).

Belongs to the complex I 49 kDa subunit family. NDH-1 is composed of 14 different subunits. Subunits NuoB, C, D, E, F, and G constitute the peripheral sector of the complex.

Its subcellular location is the cell inner membrane. It catalyses the reaction a quinone + NADH + 5 H(+)(in) = a quinol + NAD(+) + 4 H(+)(out). In terms of biological role, NDH-1 shuttles electrons from NADH, via FMN and iron-sulfur (Fe-S) centers, to quinones in the respiratory chain. The immediate electron acceptor for the enzyme in this species is believed to be ubiquinone. Couples the redox reaction to proton translocation (for every two electrons transferred, four hydrogen ions are translocated across the cytoplasmic membrane), and thus conserves the redox energy in a proton gradient. The chain is NADH-quinone oxidoreductase subunit D from Neisseria meningitidis serogroup B (strain ATCC BAA-335 / MC58).